The following is a 470-amino-acid chain: D-serine/D-alanine/glycine transporter (470 aa).

Transmembrane regions (helical) follow at residues Leu-30–Ser-50, Leu-51–Met-71, Phe-102–Ile-122, Val-137–Phe-157, Phe-162–Met-182, Leu-211–Val-231, Ile-256–Val-276, Phe-283–Val-303, Phe-350–Gly-370, Ala-371–Leu-391, Pro-413–Leu-433, and Gln-441–Gly-461.

It belongs to the amino acid-polyamine-organocation (APC) superfamily. Amino acid transporter (AAT) (TC 2.A.3.1) family.

The protein resides in the cell inner membrane. It catalyses the reaction D-alanine(in) + H(+)(in) = D-alanine(out) + H(+)(out). The enzyme catalyses D-serine(out) + H(+)(out) = D-serine(in) + H(+)(in). It carries out the reaction glycine(in) + H(+)(in) = glycine(out) + H(+)(out). Its function is as follows. Permease that is involved in the transport across the cytoplasmic membrane of D-alanine, D-serine and glycine. In Escherichia coli O157:H7, this protein is D-serine/D-alanine/glycine transporter (cycA).